A 434-amino-acid polypeptide reads, in one-letter code: Glutamyl-tRNA reductase (434 aa).

Residues 49 to 52 (TCNR), S109, 114 to 116 (EPQ), and Q120 each bind substrate. C50 (nucleophile) is an active-site residue. Residue 189-194 (GAGEMC) participates in NADP(+) binding.

It belongs to the glutamyl-tRNA reductase family. In terms of assembly, homodimer.

It carries out the reaction (S)-4-amino-5-oxopentanoate + tRNA(Glu) + NADP(+) = L-glutamyl-tRNA(Glu) + NADPH + H(+). It functions in the pathway porphyrin-containing compound metabolism; protoporphyrin-IX biosynthesis; 5-aminolevulinate from L-glutamyl-tRNA(Glu): step 1/2. In terms of biological role, catalyzes the NADPH-dependent reduction of glutamyl-tRNA(Glu) to glutamate 1-semialdehyde (GSA). The sequence is that of Glutamyl-tRNA reductase from Geotalea daltonii (strain DSM 22248 / JCM 15807 / FRC-32) (Geobacter daltonii).